The sequence spans 358 residues: MATH domain and coiled-coil domain-containing protein At3g58440 (358 aa).

The region spanning 8–131 is the MATH domain; the sequence is QDKFTWVLEK…NDRLTIVAEV (124 aa). A coiled-coil region spans residues 250-309; that stretch reads LRDAGFKVDWLEKKLDQLKEKKEEEMSGLARLHEIEERLQKLKLLFVDLESQLQKEKVEA.

The chain is MATH domain and coiled-coil domain-containing protein At3g58440 from Arabidopsis thaliana (Mouse-ear cress).